We begin with the raw amino-acid sequence, 428 residues long: Monocarboxylate transporter 13 (428 aa).

The Cytoplasmic portion of the chain corresponds to 1 to 10; sequence MVHRTEPPDG. 12 consecutive transmembrane segments (helical) span residues 11-31, 52-72, 81-101, 106-126, 139-159, 172-192, 221-241, 244-264, 283-303, 309-329, 338-358, and 374-394; these read GWGW…FGVL, VSWI…IGSA, PVVM…SFAT, LYLS…TPTL, LAMG…APLF, LLLV…LRPL, VALT…VAHL, LGWD…SDLV, LLML…VAQA, VLAV…FSVI, IYCG…LGAP, and FVVA…LPHF. Topologically, residues 395-428 are cytoplasmic; that stretch reads FSCISLSTSRPQDLVIEAPDTKIPLPKEEGLGEN.

Belongs to the major facilitator superfamily. Monocarboxylate porter (TC 2.A.1.13) family.

The protein localises to the golgi apparatus membrane. It localises to the cell membrane. In terms of biological role, proton-linked monocarboxylate transporter. May catalyze the transport of monocarboxylates across the plasma membrane. The protein is Monocarboxylate transporter 13 (Slc16a13) of Rattus norvegicus (Rat).